A 646-amino-acid chain; its full sequence is Preterminal protein (646 aa).

The Nuclear localization signal signature appears at 357–366; the sequence is RLPVRRRRRR. Position 555 is an O-(5'-phospho-DNA)-serine (serine 555). The interval 619-646 is disordered; the sequence is LHADVPLPPLQANPHPPLPPDARPQRTM. Positions 624–640 are enriched in pro residues; sequence PLPPLQANPHPPLPPDA.

The protein belongs to the adenoviridae terminal protein family. Heterodimer with the polymerase; this heterodimer binds to bp 9 to 18 of the genome. Interacts with host POU2F1; POU2F1 binds to the auxiliary sequences in the inverted terminal repeats and tethers the pTP-POL heterodimer to the origin DNA thereby participating in the assembly of the pre-initiation complex (POL-TP-DBP-NFIA-POU2F1). Post-translationally, preterminal protein is used to replicate viral genome, upon genomic encapsidation it is processed first into iTP and finally into TP by adenovirus protease.

The protein localises to the host nucleus matrix. Functionally, protein covalently bound to the viral DNA that acts as a primer for viral genomic replication by DNA strand displacement. Assembles on the viral origin of replication in an initiation complex with viral polymerase, DBP, host NFIA and host POU2F1/OCT1. During initiation, the polymerase covalently couples the first dCTP with Ser-580 of pTP. The terminal protein stimulates the template activity over 20 fold compared to protein-free templates. Neo-synthesized viral genomes are linked to two preterminal proteins, one for each 5' end. These new genomes are encapsidated in the nucleus, and during capsid maturation by viral protease, preterminal protein is first cleaved into intermediary (iTP), then into mature TP. May play a role in host nuclear matrix localization of genomic DNA. In Homo sapiens (Human), this protein is Preterminal protein.